A 252-amino-acid polypeptide reads, in one-letter code: Cell division protein ZapD (252 aa).

It belongs to the ZapD family. As to quaternary structure, interacts with FtsZ.

The protein localises to the cytoplasm. Its function is as follows. Cell division factor that enhances FtsZ-ring assembly. Directly interacts with FtsZ and promotes bundling of FtsZ protofilaments, with a reduction in FtsZ GTPase activity. The polypeptide is Cell division protein ZapD (Chromobacterium violaceum (strain ATCC 12472 / DSM 30191 / JCM 1249 / CCUG 213 / NBRC 12614 / NCIMB 9131 / NCTC 9757 / MK)).